Reading from the N-terminus, the 165-residue chain is Chorismate pyruvate-lyase (165 aa).

Residues M35, R77, L115, and E156 each coordinate substrate.

The protein belongs to the UbiC family. In terms of assembly, monomer.

The protein resides in the cytoplasm. The enzyme catalyses chorismate = 4-hydroxybenzoate + pyruvate. It participates in cofactor biosynthesis; ubiquinone biosynthesis. Its function is as follows. Removes the pyruvyl group from chorismate, with concomitant aromatization of the ring, to provide 4-hydroxybenzoate (4HB) for the ubiquinone pathway. The protein is Chorismate pyruvate-lyase of Escherichia coli (strain K12 / MC4100 / BW2952).